The sequence spans 124 residues: Large ribosomal subunit protein bL12 (124 aa).

This sequence belongs to the bacterial ribosomal protein bL12 family. Homodimer. Part of the ribosomal stalk of the 50S ribosomal subunit. Forms a multimeric L10(L12)X complex, where L10 forms an elongated spine to which 2 to 4 L12 dimers bind in a sequential fashion. Binds GTP-bound translation factors.

Forms part of the ribosomal stalk which helps the ribosome interact with GTP-bound translation factors. Is thus essential for accurate translation. The chain is Large ribosomal subunit protein bL12 from Phocaeicola vulgatus (strain ATCC 8482 / DSM 1447 / JCM 5826 / CCUG 4940 / NBRC 14291 / NCTC 11154) (Bacteroides vulgatus).